The primary structure comprises 293 residues: Acetylglutamate kinase (293 aa).

Substrate is bound by residues 70 to 71 (GG), Arg92, and Asn186.

Belongs to the acetylglutamate kinase family. ArgB subfamily.

It localises to the cytoplasm. It carries out the reaction N-acetyl-L-glutamate + ATP = N-acetyl-L-glutamyl 5-phosphate + ADP. It functions in the pathway amino-acid biosynthesis; L-arginine biosynthesis; N(2)-acetyl-L-ornithine from L-glutamate: step 2/4. Functionally, catalyzes the ATP-dependent phosphorylation of N-acetyl-L-glutamate. The polypeptide is Acetylglutamate kinase (Parasynechococcus marenigrum (strain WH8102)).